The sequence spans 63 residues: Protease 2 small chain (63 aa).

The Peptidase S8 domain maps to 11 to 63 (QWGLSGTYGIRANTAWDNGYQGQGKIIAVVDTGITDHPDLLANRTSPLGYDFI).

Belongs to the peptidase S8 family. Heterodimer of a large and a small chain.

It localises to the secreted. The chain is Protease 2 small chain from Achromobacter lyticus.